The primary structure comprises 710 residues: Solute carrier organic anion transporter family member 3A1 (710 aa).

The residue at position 1 (Met1) is an N-acetylmethionine. The segment at 1-25 (MQAKKPGGSSGGGRSGELQGDEAQR) is disordered. Residues 1–40 (MQAKKPGGSSGGGRSGELQGDEAQRNKKKKKKVSCFSNIK) are Cytoplasmic-facing. Residues 41–60 (IFLVSECALMLAQGTVGAYL) traverse the membrane as a helical segment. The Extracellular segment spans residues 61–79 (VSVLTTLERRFNLQSADVG). A helical transmembrane segment spans residues 80 to 100 (VIASSFEIGNLALILFVSYFG). Over 101 to 106 (ARGHRP) the chain is Cytoplasmic. A helical transmembrane segment spans residues 107–131 (RLIGCGGIVMALGALLSALPEFLTH). The Extracellular segment spans residues 132-174 (QYKYEAGEIRWGAEGRDVCAANGSGGDQGPDPDLICRSRTATN). An N-linked (GlcNAc...) asparagine glycan is attached at Asn153. The chain crosses the membrane as a helical span at residues 175–203 (MMYLLLIGAQVLLGIGATPVQPLGVSYID). Over 204-222 (DHVRRKDSSLYIGILFTML) the chain is Cytoplasmic. A helical membrane pass occupies residues 223–243 (VFGPACGFILGSFCTKIYVDA). The Extracellular portion of the chain corresponds to 244-261 (VFIDTSNLDITPDDPRWI). The chain crosses the membrane as a helical span at residues 262–286 (GAWWGGFLLCGALLFFSSVLMFGFP). Residues 287 to 344 (QSLPPHSDPALESEQAMLPEREYERPKPSNGVLRHPLEPDSSASCFQQLRVIPKVTKH) are Cytoplasmic-facing. Residues 345 to 366 (LLSNPVFTCIILAACMEIAVVA) traverse the membrane as a helical segment. The Extracellular portion of the chain corresponds to 367–386 (GFAAFLGKYLEQQFNLTTSS). A glycan (N-linked (GlcNAc...) asparagine) is linked at Asn381. A helical membrane pass occupies residues 387–410 (ANQLLGMTAIPCACLGIFLGGLLV). Over 411–414 (KKLS) the chain is Cytoplasmic. The helical transmembrane segment at 415 to 438 (LSALGAIRMAMLVNLVSTACYVSF) threads the bilayer. Residues 439 to 539 (LFLGCDTGPV…PGCQEAFLTF (101 aa)) are Extracellular-facing. Asn457 is a glycosylation site (N-linked (GlcNAc...) asparagine). A Kazal-like domain is found at 465-513 (LDPYSSCNKNCECQTDSFTPVCGADGITYLSACFAGCNSTNLTGCACLM). Cystine bridges form between Cys471/Cys501, Cys477/Cys497, and Cys486/Cys511. Residues Asn502, Asn505, and Asn519 are each glycosylated (N-linked (GlcNAc...) asparagine). The chain crosses the membrane as a helical span at residues 540–562 (LCVMCVCSMIGAMAQTPSVIILI). Topologically, residues 563–571 (RTVSPELKS) are cytoplasmic. Residues 572-597 (YALGVLFLLLRLLGFIPPPLIFGAGI) traverse the membrane as a helical segment. The Extracellular portion of the chain corresponds to 598–630 (DSTCLFWSTFCGEQGACALYDNVAYRYLYVSIA). Residues 631–648 (IALKSFAFLLYTTTWQCL) traverse the membrane as a helical segment. The Cytoplasmic segment spans residues 649 to 705 (RKNYKRYIKNHEGGLSTSEFFASTLTLDNLGRDPVPANQTHRTKFIYNLEDHEWCEN).

It belongs to the organo anion transporter (TC 2.A.60) family.

It is found in the basolateral cell membrane. It localises to the apical cell membrane. The protein localises to the basal cell membrane. The enzyme catalyses L-thyroxine(out) = L-thyroxine(in). It carries out the reaction prostaglandin E1(out) = prostaglandin E1(in). It catalyses the reaction prostaglandin E2(out) = prostaglandin E2(in). The catalysed reaction is prostaglandin F2alpha(out) = prostaglandin F2alpha(in). The enzyme catalyses (5Z,8Z,11Z,14Z)-eicosatetraenoate(out) = (5Z,8Z,11Z,14Z)-eicosatetraenoate(in). It carries out the reaction taurocholate(out) = taurocholate(in). It catalyses the reaction glycocholate(out) = glycocholate(in). The catalysed reaction is estrone 3-sulfate(out) = estrone 3-sulfate(in). The enzyme catalyses argipressin(out) = argipressin(in). Functionally, putative organic anion antiporter with apparent broad substrate specificity. Recognizes various substrates including thyroid hormone L-thyroxine, prostanoids such as prostaglandin E1 and E2, bile acids such as taurocholate, glycolate and glycochenodeoxycholate and peptide hormones such as L-arginine vasopressin, likely operating in a tissue-specific manner. The transport mechanism, its electrogenicity and potential tissue-specific counterions remain to be elucidated. The protein is Solute carrier organic anion transporter family member 3A1 (SLCO3A1) of Bos taurus (Bovine).